The primary structure comprises 483 residues: ATP-dependent RNA helicase DDX25 (483 aa).

The Q motif motif lies at 97 to 125; sequence KSFEELHLKNELLRGIYAMGFNRPSKIQE. The 171-residue stretch at 130 to 300 folds into the Helicase ATP-binding domain; sequence MMLADPPQNL…ERIVPDPNII (171 aa). An ATP-binding site is contributed by 143 to 150; it reads SQSGTGKT. Positions 247–250 match the DEAD box motif; sequence DEAD. Positions 311 to 478 constitute a Helicase C-terminal domain; that stretch reads NIQQFYDQCE…KLNSMDMDEM (168 aa).

The protein belongs to the DEAD box helicase family. As to expression, an mRNA component of germ plasm. Localizes to the granulo-fibrillar material (GFM) of the mitochondrial cloud in stage I oocytes. Associated, at a low level, with the periphery of mature germinal granules in later stage oocytes. Localizes to the vegetal cortex in stage II oocytes and segregates with germ plasm during early embryogenesis. In adults, expression is restricted to the ovary and, at a lower level, to spermatogonia, spermatocytes and spermatids of the testis.

Its subcellular location is the cytoplasm. It localises to the nucleus. The catalysed reaction is ATP + H2O = ADP + phosphate + H(+). In terms of biological role, ATP-dependent RNA helicase. This Xenopus laevis (African clawed frog) protein is ATP-dependent RNA helicase DDX25.